A 166-amino-acid chain; its full sequence is Deoxyuridine 5'-triphosphate nucleotidohydrolase (166 aa).

The tract at residues 1-24 is disordered; sequence MACVNEPSPKLQKLDRNGIHGDSS. Glu138 contributes to the Mg(2+) binding site.

The protein belongs to the dUTPase family. In terms of assembly, homotrimer. It depends on Mg(2+) as a cofactor.

The catalysed reaction is dUTP + H2O = dUMP + diphosphate + H(+). It functions in the pathway pyrimidine metabolism; dUMP biosynthesis; dUMP from dCTP (dUTP route): step 2/2. In terms of biological role, this enzyme is involved in nucleotide metabolism: it produces dUMP, the immediate precursor of thymidine nucleotides and it decreases the intracellular concentration of dUTP, preventing uracil incorporation into DNA. In Arabidopsis thaliana (Mouse-ear cress), this protein is Deoxyuridine 5'-triphosphate nucleotidohydrolase (DUT).